The sequence spans 445 residues: Phosphatidate cytidylyltransferase 2 (445 aa).

Residues 1–39 (MTELRQRVAREPEAPPEDKESESEAKADGETASDSESRV) are compositionally biased toward basic and acidic residues. The disordered stretch occupies residues 1 to 52 (MTELRQRVAREPEAPPEDKESESEAKADGETASDSESRVEAVTQPPSADDTP). Ser21 bears the Phosphoserine mark. Thr31 carries the phosphothreonine modification. Phosphoserine is present on residues Ser33, Ser35, and Ser37. Thr51 is subject to Phosphothreonine. Transmembrane regions (helical) follow at residues 79–99 (MIAF…MIVM), 132–152 (FLLC…FFTL), 166–186 (HRFI…LSLV), 213–233 (LVIH…SCVI), 262–282 (GFIG…YVMS), and 340–360 (IALS…ASGF).

The protein belongs to the CDS family. In terms of assembly, homodimer.

Its subcellular location is the endoplasmic reticulum membrane. It catalyses the reaction a 1,2-diacyl-sn-glycero-3-phosphate + CTP + H(+) = a CDP-1,2-diacyl-sn-glycerol + diphosphate. The catalysed reaction is 1-octadecanoyl-2-(5Z,8Z,11Z,14Z-eicosatetraenoyl)-sn-glycero-3-phosphate + CTP + H(+) = 1-octadecanoyl-2-(5Z,8Z,11Z,14Z-eicosatetraenoyl)-sn-glycero-3-cytidine-5'-diphosphate + diphosphate. It carries out the reaction 1-octadecanoyl-2-(9Z,12Z-octadecadienoyl)-sn-glycero-3-phosphate + CTP + H(+) = 1-octadecanoyl-2-(9Z,12Z-octadecadienoyl)-sn-glycero-3-cytidine-5'-diphosphate + diphosphate. The enzyme catalyses 1-hexadecanoyl-2-(5Z,8Z,11Z,14Z-eicosatetraenoyl)-sn-glycero-3-phosphate + CTP + H(+) = 1-hexadecanoyl-2-(5Z,8Z,11Z,14Z-eicosatetraenoyl)-sn-glycero-3-cytidine-5'-diphosphate + diphosphate. It catalyses the reaction 1,2-di-(5Z,8Z,11Z,14Z)-eicosatetraenoyl-sn-glycero-3-phosphate + CTP + H(+) = 1,2-di-(5Z,8Z,11Z,14Z-eicosatetraenoyl)-sn-glycero-3-cytidine-5'-diphosphate + diphosphate. The catalysed reaction is 1-octadecanoyl-2-(9Z-octadecenoyl)-sn-glycero-3-phosphate + CTP + H(+) = 1-octadecanoyl-2-(9Z-octadecenoyl)-sn-glycero-3-cytidine-5'-diphosphate + diphosphate. It carries out the reaction 1-octadecanoyl-2-(4Z,7Z,10Z,13Z,16Z,19Z-docosahexaenoyl)-sn-glycero-3-phosphate + CTP + H(+) = 1-octadecanoyl-2-(4Z,7Z,10Z,13Z,16Z,19Z-docosahexaenoyl)-sn-glycero-3-cytidine-5'-diphosphate + diphosphate. The enzyme catalyses 1,2-di-(9Z,12Z-octadecadienoyl)-sn-glycero-3-phosphate + CTP + H(+) = 1,2-di-(9Z,12Z-octadecadienoyl)-sn-glycero-3-cytidine-5'-diphosphate + diphosphate. It catalyses the reaction 1,2-di-(9Z-octadecenoyl)-sn-glycero-3-phosphate + CTP + H(+) = 1,2-di-(9Z-octadecenoyl)-sn-glycero-3-cytidine-5'-diphosphate + diphosphate. Its pathway is phospholipid metabolism; CDP-diacylglycerol biosynthesis; CDP-diacylglycerol from sn-glycerol 3-phosphate: step 3/3. Catalyzes the conversion of phosphatidic acid (PA) to CDP-diacylglycerol (CDP-DAG), an essential intermediate in the synthesis of phosphatidylglycerol, cardiolipin and phosphatidylinositol. Exhibits specificity for the nature of the acyl chains at the sn-1 and sn-2 positions in the substrate, PA and the preferred acyl chain composition is 1-stearoyl-2-arachidonoyl-sn-phosphatidic acid. Plays an important role in regulating the growth and maturation of lipid droplets which are storage organelles at the center of lipid and energy homeostasis. This is Phosphatidate cytidylyltransferase 2 (CDS2) from Bos taurus (Bovine).